A 339-amino-acid polypeptide reads, in one-letter code: Centromere protein N (339 aa).

Phosphoserine occurs at positions 226 and 235.

The protein belongs to the CENP-N/CHL4 family. Component of the CENPA-NAC complex, at least composed of CENPA, CENPC, CENPH, CENPM, CENPN, CENPT and CENPU. The CENPA-NAC complex interacts with the CENPA-CAD complex, composed of CENPI, CENPK, CENPL, CENPO, CENPP, CENPQ, CENPR and CENPS. Interacts directly with CENPA. Identified in a centromere complex containing histones H2A, H2B and H4, and at least CENPA, CENPB, CENPC, CENPT, CENPN, HJURP, SUPT16H, SSRP1 and RSF1.

It is found in the nucleus. It localises to the chromosome. The protein resides in the centromere. Its subcellular location is the kinetochore. In terms of biological role, component of the CENPA-NAC (nucleosome-associated) complex, a complex that plays a central role in assembly of kinetochore proteins, mitotic progression and chromosome segregation. The CENPA-NAC complex recruits the CENPA-CAD (nucleosome distal) complex and may be involved in incorporation of newly synthesized CENPA into centromeres. CENPN is the first protein to bind specifically to CENPA nucleosomes and the direct binding of CENPA nucleosomes by CENPN is required for centromere assembly. Required for chromosome congression and efficiently align the chromosomes on a metaphase plate. This chain is Centromere protein N (CENPN), found in Bos taurus (Bovine).